The sequence spans 311 residues: tRNA dimethylallyltransferase (311 aa).

Residue 11 to 18 (GPTASGKS) participates in ATP binding. Substrate is bound at residue 13-18 (TASGKS). 2 interaction with substrate tRNA regions span residues 36-39 (DSMQ) and 160-164 (QRLIR).

Belongs to the IPP transferase family. Monomer. The cofactor is Mg(2+).

The catalysed reaction is adenosine(37) in tRNA + dimethylallyl diphosphate = N(6)-dimethylallyladenosine(37) in tRNA + diphosphate. Its function is as follows. Catalyzes the transfer of a dimethylallyl group onto the adenine at position 37 in tRNAs that read codons beginning with uridine, leading to the formation of N6-(dimethylallyl)adenosine (i(6)A). This chain is tRNA dimethylallyltransferase, found in Rickettsia typhi (strain ATCC VR-144 / Wilmington).